Reading from the N-terminus, the 264-residue chain is Zearalenone hydrolase (264 aa).

One can recognise an AB hydrolase-1 domain in the interval 27–207 (VLVPDGLGEC…KDLEALRGKP (181 aa)). Residues glycine 32, serine 102, and serine 103 each contribute to the zearalenone site. Serine 102 is a catalytic residue. Glutamate 126 is an active-site residue. 4 residues coordinate zearalenone: tryptophan 183, tyrosine 187, serine 220, and histidine 242. Residue histidine 242 is part of the active site.

The protein belongs to the AB hydrolase superfamily. Hydrolase RutD family. Homodimer.

The catalysed reaction is zearalenone + H2O = hydrolyzed zearalenone + H(+). Lactonohydrolase that specifically hydrolyzes and deactivates the mycotoxin zearalenone (ZEN) and its zearalenol (ZOL) derivatives. ZHD101 prefers ZEN to ZOL as its substrate, but ZOL, especially the alpha-form, shows higher estrogenic toxicity than ZEN. This is Zearalenone hydrolase from Bionectria ochroleuca (Gliocladium roseum).